A 502-amino-acid chain; its full sequence is Uric acid degradation bifunctional protein (502 aa).

Residues 1–178 (MMRLKQLNEM…NSMTKHKERV (178 aa)) are OHCU decarboxylase. H68 serves as the catalytic Proton donor; for OHCU decarboxylase activity. Residues P69, 81–85 (SQEEQ), and 116–120 (FVMAV) each bind 5-hydroxy-2-oxo-4-ureido-2,5-dihydro-1H-imidazole-5-carboxylate. A urate oxidase region spans residues 179–502 (MYYGKGDVFA…DEPDHKGALK (324 aa)). K183 acts as the Charge relay system; for urate oxidase activity in catalysis. The Charge relay system role is filled by K194. The active-site Charge relay system; for urate oxidase activity is the T243. Urate-binding residues include T243, D244, F354, R371, I419, Q420, and N446.

In the N-terminal section; belongs to the OHCU decarboxylase family. It in the C-terminal section; belongs to the uricase family.

It carries out the reaction 5-hydroxy-2-oxo-4-ureido-2,5-dihydro-1H-imidazole-5-carboxylate + H(+) = (S)-allantoin + CO2. The enzyme catalyses urate + O2 + H2O = 5-hydroxyisourate + H2O2. It functions in the pathway purine metabolism; urate degradation; (S)-allantoin from urate: step 1/3. It participates in purine metabolism; urate degradation; (S)-allantoin from urate: step 3/3. Its function is as follows. Catalyzes two steps in the degradation of uric acid, i.e. the oxidation of uric acid to 5-hydroxyisourate (HIU) and the stereoselective decarboxylation of 2-oxo-4-hydroxy-4-carboxy-5-ureidoimidazoline (OHCU) to (S)-allantoin. This is Uric acid degradation bifunctional protein (uao) from Bacillus sp. (strain TB-90).